The chain runs to 298 residues: Thymidylate synthase (298 aa).

DUMP is bound by residues arginine 25 and 159–160 (RR). The active-site Nucleophile is the cysteine 179. DUMP contacts are provided by residues 200–203 (RSVD), asparagine 211, and 241–243 (HLY). Aspartate 203 contributes to the (6R)-5,10-methylene-5,6,7,8-tetrahydrofolate binding site. Position 297 (alanine 297) interacts with (6R)-5,10-methylene-5,6,7,8-tetrahydrofolate.

Belongs to the thymidylate synthase family. Bacterial-type ThyA subfamily. As to quaternary structure, homodimer.

The protein localises to the cytoplasm. The enzyme catalyses dUMP + (6R)-5,10-methylene-5,6,7,8-tetrahydrofolate = 7,8-dihydrofolate + dTMP. It participates in pyrimidine metabolism; dTTP biosynthesis. Catalyzes the reductive methylation of 2'-deoxyuridine-5'-monophosphate (dUMP) to 2'-deoxythymidine-5'-monophosphate (dTMP) while utilizing 5,10-methylenetetrahydrofolate (mTHF) as the methyl donor and reductant in the reaction, yielding dihydrofolate (DHF) as a by-product. This enzymatic reaction provides an intracellular de novo source of dTMP, an essential precursor for DNA biosynthesis. The protein is Thymidylate synthase of Cereibacter sphaeroides (strain ATCC 17023 / DSM 158 / JCM 6121 / CCUG 31486 / LMG 2827 / NBRC 12203 / NCIMB 8253 / ATH 2.4.1.) (Rhodobacter sphaeroides).